A 304-amino-acid chain; its full sequence is PTB domain-containing engulfment adapter protein 1 (304 aa).

T16 bears the Phosphothreonine mark. Positions 21–176 (SKHYIPYNAK…AGMQKRIQDL (156 aa)) constitute a PID domain. A coiled-coil region spans residues 159-200 (DVETRKQIAGMQKRIQDLETENMELKNKVQDLESRLRTTQVS). A Phosphoserine modification is found at S223.

Belongs to the ced-6 family. In terms of assembly, homodimer. Interacts with clathrin and MEGF10. Interacts with GDP-bound ARF6, but not with GTP-bound ARF6. Part of a complex composed of GULP1, ACAP1 and ARF6. Interacts with ACAP1, LRP1 and STAB2. In terms of tissue distribution, detected throughout the brain, particularly in Purkinje cells, hippocampal and cortical neurons (at protein level).

The protein resides in the cytoplasm. Its function is as follows. Modulates cellular glycosphingolipid and cholesterol transport. May play a role in the internalization of various LRP1 ligands, such as PSAP. May function as an adapter protein. Required for efficient phagocytosis of apoptotic cells. Increases cellular levels of GTP-bound ARF6. This chain is PTB domain-containing engulfment adapter protein 1 (Gulp1), found in Mus musculus (Mouse).